The following is a 74-amino-acid chain: Peptide BmKb2 (74 aa).

The first 22 residues, methionine 1–alanine 22, serve as a signal peptide directing secretion. Residue lysine 40 is modified to Lysine amide. The propeptide occupies aspartate 46 to tyrosine 74.

Belongs to the non-disulfide-bridged peptide (NDBP) superfamily. Short antimicrobial peptide (group 4) family.

The protein resides in the secreted. The protein localises to the target cell membrane. In terms of biological role, antibacterial peptide. This peptide gene is up-regulated at the transcriptional level after the venom gland is challenged by Gram-positive bacteria. This chain is Peptide BmKb2, found in Olivierus martensii (Manchurian scorpion).